Consider the following 345-residue polypeptide: Ferrochelatase (345 aa).

Fe cation is bound by residues histidine 215 and glutamate 296.

Belongs to the ferrochelatase family.

It is found in the cytoplasm. It catalyses the reaction heme b + 2 H(+) = protoporphyrin IX + Fe(2+). Its pathway is porphyrin-containing compound metabolism; protoheme biosynthesis; protoheme from protoporphyrin-IX: step 1/1. Its function is as follows. Catalyzes the ferrous insertion into protoporphyrin IX. This Rhodopseudomonas palustris (strain BisB5) protein is Ferrochelatase.